Here is a 262-residue protein sequence, read N- to C-terminus: Flap endonuclease Xni (262 aa).

Mg(2+) is bound at residue aspartate 105. In terms of domain architecture, 5'-3' exonuclease spans serine 164–asparagine 251. K(+)-binding residues include leucine 172, alanine 173, proline 181, isoleucine 183, and isoleucine 186. The segment at glycine 185–serine 190 is interaction with DNA.

This sequence belongs to the Xni family. The cofactor is Mg(2+). Requires K(+) as cofactor.

Its function is as follows. Has flap endonuclease activity. During DNA replication, flap endonucleases cleave the 5'-overhanging flap structure that is generated by displacement synthesis when DNA polymerase encounters the 5'-end of a downstream Okazaki fragment. The protein is Flap endonuclease Xni of Shewanella sp. (strain W3-18-1).